The following is a 309-amino-acid chain: Virulence regulon transcriptional activator VirB (309 aa).

Residues 152–171 constitute a DNA-binding region (H-T-H motif); the sequence is KDIAKKENLSRAKVTRAFQA.

This sequence belongs to the ParB family.

In terms of biological role, transcription activator for the invasion antigens IpaB, IpaC and IpaD. VirB is itself regulated by VirF. This chain is Virulence regulon transcriptional activator VirB (virB), found in Shigella flexneri.